The chain runs to 120 residues: Ribosome-binding factor A (120 aa).

It belongs to the RbfA family. In terms of assembly, monomer. Binds 30S ribosomal subunits, but not 50S ribosomal subunits or 70S ribosomes.

The protein resides in the cytoplasm. In terms of biological role, one of several proteins that assist in the late maturation steps of the functional core of the 30S ribosomal subunit. Associates with free 30S ribosomal subunits (but not with 30S subunits that are part of 70S ribosomes or polysomes). Required for efficient processing of 16S rRNA. May interact with the 5'-terminal helix region of 16S rRNA. This Desulforamulus reducens (strain ATCC BAA-1160 / DSM 100696 / MI-1) (Desulfotomaculum reducens) protein is Ribosome-binding factor A.